An 88-amino-acid chain; its full sequence is RQC P-site tRNA stabilizing factor (88 aa).

Positions 1-60 constitute an S4 RNA-binding domain; it reads MRLDKYLKVSRIIKRRTVAKEVADKGRIKVNGILAKSSTDLKVNDQVEIRFGNKLLLVKV.

Belongs to the RqcP family. As to quaternary structure, associates with stalled 50S ribosomal subunits. Binds to RqcH, 23S rRNA and the P-site tRNA. Does not require RqcH for association with 50S subunits.

Functionally, key component of the ribosome quality control system (RQC), a ribosome-associated complex that mediates the extraction of incompletely synthesized nascent chains from stalled ribosomes and their subsequent degradation. RqcH recruits Ala-charged tRNA, and with RqcP directs the elongation of stalled nascent chains on 50S ribosomal subunits, leading to non-templated C-terminal alanine extensions (Ala tail). The Ala tail promotes nascent chain degradation. RqcP is associated with the translocation-like movement of the peptidyl-tRNA from the A-site into the P-site. The sequence is that of RQC P-site tRNA stabilizing factor from Streptococcus pneumoniae (strain ATCC BAA-255 / R6).